The sequence spans 427 residues: MELNIKMDRSKELFEESKKYLVGGVNSPVRLFKPFPFFVKSAKDCFLYDEDGNEFIDYCLAYGPMVLGHANENILNAVKSQMDLGTAYGVPSEKEITLAKEVINRIPCAEMVRFVNSGTEATMGAIRLARGVTKRNKIIKFEGAFHGAHDYVLVKTGSGALTHGAPNSPGIPEDTTKNTLLIPFNDEEAVRKVISENKEEIACIILEPVMGNVGCIPPKDGYLQFLREITEENGILLIFDEVITGFRLSKGGAQEYYGIKSDLATVGKILGGGFPIGAITGKKEYMEQFSPNGQIYQAGTFNGNPISVTAGIETLKNLDDKFYKETTKKAGILSNCLRETAEKYNIPAKVYNVASIFQVYFNDKEIVTYEDAKSSDTEKFMKYFYTLLENGVFVAPSQFECCFTSIKHNDEVLEKTMNAIDIAMKKL.

The residue at position 268 (Lys-268) is an N6-(pyridoxal phosphate)lysine.

Belongs to the class-III pyridoxal-phosphate-dependent aminotransferase family. HemL subfamily. The cofactor is pyridoxal 5'-phosphate.

Its subcellular location is the cytoplasm. It carries out the reaction (S)-4-amino-5-oxopentanoate = 5-aminolevulinate. It participates in porphyrin-containing compound metabolism; protoporphyrin-IX biosynthesis; 5-aminolevulinate from L-glutamyl-tRNA(Glu): step 2/2. The protein is Glutamate-1-semialdehyde 2,1-aminomutase of Methanococcus maripaludis (strain DSM 14266 / JCM 13030 / NBRC 101832 / S2 / LL).